Reading from the N-terminus, the 306-residue chain is Curved DNA-binding protein (306 aa).

In terms of domain architecture, J spans 5–69; the sequence is DYYAIMGVKP…QRRAEYDQMW (65 aa).

It is found in the cytoplasm. The protein localises to the nucleoid. In terms of biological role, DNA-binding protein that preferentially recognizes a curved DNA sequence. It is probably a functional analog of DnaJ; displays overlapping activities with DnaJ, but functions under different conditions, probably acting as a molecular chaperone in an adaptive response to environmental stresses other than heat shock. Lacks autonomous chaperone activity; binds native substrates and targets them for recognition by DnaK. Its activity is inhibited by the binding of CbpM. The polypeptide is Curved DNA-binding protein (Escherichia coli (strain K12 / MC4100 / BW2952)).